The sequence spans 151 residues: Spore coat polysaccharide biosynthesis protein SpsL (151 aa).

This sequence to dTDP-4-dehydrorhamnose reductase.

It functions in the pathway spore coat biogenesis; spore coat polysaccharide biosynthesis. In Bacillus subtilis (strain 168), this protein is Spore coat polysaccharide biosynthesis protein SpsL (spsL).